The following is a 362-amino-acid chain: Snurportin-1 (362 aa).

Met1 is modified (N-acetylmethionine). 2 disordered regions span residues 1 to 40 and 69 to 90; these read MEELSQALAGSFSVSQDLNSTAAPHPRLSQYKSKYSSLEQ and DWTGMESEEEEEKKDDEEMDVD. Positions 1-65 are necessary for interaction with KPNB1 and m3G-cap U1 and U5 snRNP import receptor activity; it reads MEELSQALAG…LDYVNHARRL (65 aa). The segment at 1–160 is necessary for interaction with XPO1; that stretch reads MEELSQALAG…NTFPSLLPGG (160 aa). The IBB domain occupies 11-73; that stretch reads SFSVSQDLNS…RLAEDDWTGM (63 aa). Residues 12-22 are compositionally biased toward polar residues; it reads FSVSQDLNSTA. The span at 69-89 shows a compositional bias: acidic residues; that stretch reads DWTGMESEEEEEKKDDEEMDV. Phosphoserine is present on Ser75. The segment at 128–130 is interaction with m3G-cap structure; it reads GKR. The tract at residues 210–330 is necessary for binding to the m3G-cap structure; the sequence is LHSKLPEEEG…GIMGKLTPRA (121 aa). The disordered stretch occupies residues 319-362; it reads KEGIMGKLTPRASENGHYELEHLSTPKLKSPPQRPNHPESLMEN. The segment covering 332–342 has biased composition (basic and acidic residues); sequence ENGHYELEHLS.

Belongs to the snurportin family. Component of an import snRNP complex composed of KPNB1, SNUPN, SMN1 and ZNF259. Component of a nuclear export receptor complex composed of KPNB1, Ran, SNUPN and XPO1. Found in a trimeric export complex with SNUPN, Ran and XPO1. Interacts (via IBB domain) with KPNB1; the interaction is direct. Interacts with DDX20, IPO7, SMN1, SNRPB and XPO1. Interacts directly with XPO1. Its interaction with XPO1 and binding to m3G-cap U snRNPs appears to be mutually exclusive. Can form homomers.

The protein resides in the nucleus. It is found in the cytoplasm. In terms of biological role, functions as an U snRNP-specific nuclear import adapter. Involved in the trimethylguanosine (m3G)-cap-dependent nuclear import of U snRNPs. Binds specifically to the terminal m3G-cap U snRNAs. The polypeptide is Snurportin-1 (SNUPN) (Bos taurus (Bovine)).